A 238-amino-acid polypeptide reads, in one-letter code: Lipid transferase CIDEC (238 aa).

A required for liquid-liquid phase separation (LLPS) region spans residues 1 to 35 (MDYAMKSLSLLYPRSLSRHVAVSTAVVTQQLVSEP). Residues 41–118 (RARPCRVSTA…VLQKGQKWKS (78 aa)) enclose the CIDE-N domain.

This sequence belongs to the CIDE family. In terms of assembly, homodimer. Interacts with CIDEA. Homooligomer; undergoes liquid-liquid phase separation (LLPS) via its N-terminus, facilitating lipid droplet fusion, occurs at the lipid droplet contact sites. Interacts with PLIN1. Interacts with NFAT5; this interaction is direct and retains NFAT5 in the cytoplasm. Interacts with CEBPB. Interacts with isoform CLSTN3beta of CLSTN3; inhibiting the lipid transferase activity of CIDEC. Ubiquitinated and targeted to proteasomal degradation, resulting in a short half-life (about 15 minutes in 3T3-L1 cells). Protein stability depends on triaclyglycerol synthesis, fatty acid availability and lipid droplet formation.

Its subcellular location is the lipid droplet. The protein resides in the endoplasmic reticulum. The protein localises to the nucleus. The catalysed reaction is a triacyl-sn-glycerol(in) = a triacyl-sn-glycerol(out). Lipid transferase specifically expressed in white adipose tissue, which promotes unilocular lipid droplet formation by mediating lipid droplet fusion. Lipid droplet fusion promotes their enlargement, restricting lipolysis and favoring lipid storage. Localizes on the lipid droplet surface, at focal contact sites between lipid droplets, and mediates atypical lipid droplet fusion by undergoing liquid-liquid phase separation (LLPS) and promoting directional net neutral lipid transfer from the smaller to larger lipid droplets. The transfer direction may be driven by the internal pressure difference between the contacting lipid droplet pair. Its role in neutral lipid transfer and lipid droplet enlargement is activated by the interaction with PLIN1. May also act as a CEBPB coactivator in the white adipose tissue to control the expression of a subset of CEBPB downstream target genes, including SOCS1, SOCS3, TGFB1, TGFBR1, ID2 and XDH. When overexpressed in preadipocytes, induces apoptosis or increases cell susceptibility to apoptosis induced by serum deprivation or TGFB treatment. This is Lipid transferase CIDEC from Rattus norvegicus (Rat).